The primary structure comprises 309 residues: Homoserine kinase (309 aa).

91-101 (PIGSGLGSSAC) contributes to the ATP binding site.

Belongs to the GHMP kinase family. Homoserine kinase subfamily.

Its subcellular location is the cytoplasm. The catalysed reaction is L-homoserine + ATP = O-phospho-L-homoserine + ADP + H(+). It functions in the pathway amino-acid biosynthesis; L-threonine biosynthesis; L-threonine from L-aspartate: step 4/5. Functionally, catalyzes the ATP-dependent phosphorylation of L-homoserine to L-homoserine phosphate. This is Homoserine kinase from Buchnera aphidicola subsp. Acyrthosiphon pisum (strain APS) (Acyrthosiphon pisum symbiotic bacterium).